We begin with the raw amino-acid sequence, 1235 residues long: Receptor-type adenylate cyclase ESAG 4 (1235 aa).

The tract at residues 1 to 20 is disordered; the sequence is MNMLHLSDRNASLAPSGGEH. Residues 1–32 are Cytoplasmic-facing; that stretch reads MNMLHLSDRNASLAPSGGEHSLPTGGAVCRDA. A helical transmembrane segment spans residues 33–53; sequence MDILPVILRAPVALLLLLVVL. Topologically, residues 54–858 are extracellular; the sequence is PQLSVGAEAN…SNAGRISGAS (805 aa). Asn-63, Asn-90, Asn-97, Asn-362, Asn-531, Asn-566, Asn-705, and Asn-830 each carry an N-linked (GlcNAc...) asparagine glycan. A helical transmembrane segment spans residues 859–879; it reads LVGIIIGGALALFLVVALGVV. Topologically, residues 880–1235 are cytoplasmic; sequence PYFFLRNTVI…VSSQVEERLL (356 aa). The Guanylate cyclase domain maps to 900–1054; it reads TLIFTDIESS…RTSNMAARTE (155 aa). Residues Asp-905 and Asp-948 each coordinate Mg(2+).

Belongs to the adenylyl cyclase class-3 family. The cofactor is Mg(2+).

The protein localises to the membrane. It carries out the reaction ATP = 3',5'-cyclic AMP + diphosphate. Could act as a receptor for an unknown ligand. The protein is Receptor-type adenylate cyclase ESAG 4 (ESAG4) of Trypanosoma brucei brucei.